Consider the following 178-residue polypeptide: ATP synthase subunit delta (178 aa).

The protein belongs to the ATPase delta chain family. F-type ATPases have 2 components, F(1) - the catalytic core - and F(0) - the membrane proton channel. F(1) has five subunits: alpha(3), beta(3), gamma(1), delta(1), epsilon(1). F(0) has three main subunits: a(1), b(2) and c(10-14). The alpha and beta chains form an alternating ring which encloses part of the gamma chain. F(1) is attached to F(0) by a central stalk formed by the gamma and epsilon chains, while a peripheral stalk is formed by the delta and b chains.

The protein resides in the cell inner membrane. Its function is as follows. F(1)F(0) ATP synthase produces ATP from ADP in the presence of a proton or sodium gradient. F-type ATPases consist of two structural domains, F(1) containing the extramembraneous catalytic core and F(0) containing the membrane proton channel, linked together by a central stalk and a peripheral stalk. During catalysis, ATP synthesis in the catalytic domain of F(1) is coupled via a rotary mechanism of the central stalk subunits to proton translocation. Functionally, this protein is part of the stalk that links CF(0) to CF(1). It either transmits conformational changes from CF(0) to CF(1) or is implicated in proton conduction. The chain is ATP synthase subunit delta from Acinetobacter baylyi (strain ATCC 33305 / BD413 / ADP1).